The chain runs to 405 residues: Elongation factor Tu (405 aa).

The 206-residue stretch at 10–215 folds into the tr-type G domain; it reads KPHVNVGTIG…AVDSYIPTPE (206 aa). Residues 19–26 are G1; the sequence is GHVDHGKT. 19–26 contacts GTP; it reads GHVDHGKT. Position 26 (threonine 26) interacts with Mg(2+). The G2 stretch occupies residues 61–65; that stretch reads GITIN. The segment at 82 to 85 is G3; it reads DCPG. GTP contacts are provided by residues 82 to 86 and 137 to 140; these read DCPGH and NKVD. Residues 137–140 form a G4 region; it reads NKVD. A G5 region spans residues 175–177; the sequence is SAL.

It belongs to the TRAFAC class translation factor GTPase superfamily. Classic translation factor GTPase family. EF-Tu/EF-1A subfamily. As to quaternary structure, monomer.

It localises to the cytoplasm. The catalysed reaction is GTP + H2O = GDP + phosphate + H(+). Functionally, GTP hydrolase that promotes the GTP-dependent binding of aminoacyl-tRNA to the A-site of ribosomes during protein biosynthesis. The protein is Elongation factor Tu of Deinonema sp.